A 133-amino-acid chain; its full sequence is Ribosome-binding factor A (133 aa).

This sequence belongs to the RbfA family. As to quaternary structure, monomer. Binds 30S ribosomal subunits, but not 50S ribosomal subunits or 70S ribosomes.

The protein resides in the cytoplasm. Its function is as follows. One of several proteins that assist in the late maturation steps of the functional core of the 30S ribosomal subunit. Associates with free 30S ribosomal subunits (but not with 30S subunits that are part of 70S ribosomes or polysomes). Required for efficient processing of 16S rRNA. May interact with the 5'-terminal helix region of 16S rRNA. In Bordetella parapertussis (strain 12822 / ATCC BAA-587 / NCTC 13253), this protein is Ribosome-binding factor A.